The following is a 256-amino-acid chain: Cysteine-rich repeat secretory protein 29 (256 aa).

An N-terminal signal peptide occupies residues 1-26 (MSSVFGSVHILAMIAIQLLLIHSVSS). 2 consecutive Gnk2-homologous domains span residues 33 to 136 (YLHH…SVAS) and 142 to 253 (YEND…LYPF).

This sequence belongs to the cysteine-rich repeat secretory protein family.

The protein localises to the secreted. This chain is Cysteine-rich repeat secretory protein 29 (CRRSP29), found in Arabidopsis thaliana (Mouse-ear cress).